Consider the following 331-residue polypeptide: Ribosomal RNA small subunit methyltransferase H (331 aa).

S-adenosyl-L-methionine is bound by residues 38 to 40, aspartate 56, phenylalanine 83, aspartate 100, and glutamine 107; that span reads GGY. Residues 289–331 form a disordered region; that stretch reads AELAENPRARSARLRVGVRTDAPAGKVDPQALGTPLIPKKGRR.

The protein belongs to the methyltransferase superfamily. RsmH family.

It localises to the cytoplasm. It carries out the reaction cytidine(1402) in 16S rRNA + S-adenosyl-L-methionine = N(4)-methylcytidine(1402) in 16S rRNA + S-adenosyl-L-homocysteine + H(+). Functionally, specifically methylates the N4 position of cytidine in position 1402 (C1402) of 16S rRNA. In Cereibacter sphaeroides (strain ATCC 17029 / ATH 2.4.9) (Rhodobacter sphaeroides), this protein is Ribosomal RNA small subunit methyltransferase H.